The sequence spans 68 residues: P21 prophage-derived head-stabilizing protein (68 aa).

It belongs to the lambda phage gpW family.

This is P21 prophage-derived head-stabilizing protein from Escherichia coli O6:H1 (strain CFT073 / ATCC 700928 / UPEC).